The chain runs to 161 residues: SsrA-binding protein (161 aa).

The protein belongs to the SmpB family.

It is found in the cytoplasm. Required for rescue of stalled ribosomes mediated by trans-translation. Binds to transfer-messenger RNA (tmRNA), required for stable association of tmRNA with ribosomes. tmRNA and SmpB together mimic tRNA shape, replacing the anticodon stem-loop with SmpB. tmRNA is encoded by the ssrA gene; the 2 termini fold to resemble tRNA(Ala) and it encodes a 'tag peptide', a short internal open reading frame. During trans-translation Ala-aminoacylated tmRNA acts like a tRNA, entering the A-site of stalled ribosomes, displacing the stalled mRNA. The ribosome then switches to translate the ORF on the tmRNA; the nascent peptide is terminated with the 'tag peptide' encoded by the tmRNA and targeted for degradation. The ribosome is freed to recommence translation, which seems to be the essential function of trans-translation. This is SsrA-binding protein from Baumannia cicadellinicola subsp. Homalodisca coagulata.